The following is a 106-amino-acid chain: Large ribosomal subunit protein eL42 (106 aa).

It belongs to the eukaryotic ribosomal protein eL42 family.

The sequence is that of Large ribosomal subunit protein eL42 (RPL44) from Schwanniomyces occidentalis (Yeast).